Consider the following 198-residue polypeptide: tRNA (pseudouridine(54)-N(1))-methyltransferase (198 aa).

S-adenosyl-L-methionine contacts are provided by Leu-134 and Gly-155.

It belongs to the methyltransferase superfamily. TrmY family. Homodimer.

It is found in the cytoplasm. The enzyme catalyses pseudouridine(54) in tRNA + S-adenosyl-L-methionine = N(1)-methylpseudouridine(54) in tRNA + S-adenosyl-L-homocysteine + H(+). Specifically catalyzes the N1-methylation of pseudouridine at position 54 (Psi54) in tRNAs. The protein is tRNA (pseudouridine(54)-N(1))-methyltransferase of Thermococcus kodakarensis (strain ATCC BAA-918 / JCM 12380 / KOD1) (Pyrococcus kodakaraensis (strain KOD1)).